The chain runs to 37 residues: Cytochrome b6-f complex subunit 5 (37 aa).

Residues 5–25 traverse the membrane as a helical segment; the sequence is LLSGIVLGLVPVTIAGLFVTA.

Belongs to the PetG family. In terms of assembly, the 4 large subunits of the cytochrome b6-f complex are cytochrome b6, subunit IV (17 kDa polypeptide, PetD), cytochrome f and the Rieske protein, while the 4 small subunits are PetG, PetL, PetM and PetN. The complex functions as a dimer.

It localises to the plastid. The protein localises to the chloroplast thylakoid membrane. Its function is as follows. Component of the cytochrome b6-f complex, which mediates electron transfer between photosystem II (PSII) and photosystem I (PSI), cyclic electron flow around PSI, and state transitions. PetG is required for either the stability or assembly of the cytochrome b6-f complex. This Chlorella vulgaris (Green alga) protein is Cytochrome b6-f complex subunit 5.